Consider the following 334-residue polypeptide: Endoplasmic reticulum junction formation protein lunapark (334 aa).

Residues 1–40 (MGWFFQKKKEFDFGGELDRLEMKLEEAQYNIDNIQSQKKK) are Cytoplasmic-facing. A coiled-coil region spans residues 12 to 42 (DFGGELDRLEMKLEEAQYNIDNIQSQKKKIL). A helical membrane pass occupies residues 41–61 (ILFRYTVCSLAIYTIGMAVWA). The Lumenal segment spans residues 62–78 (SRSSILFQHPLFSKLFR). The chain crosses the membrane as a helical span at residues 79–99 (ISLYILGVFSLYMFRWAIAWF). Residues 99 to 127 (FCEKRLSRARMNLHKLNAEKRKILDALKS) adopt a coiled-coil conformation. The Cytoplasmic segment spans residues 100–334 (CEKRLSRARM…SVPESLTPTK (235 aa)). The C4-type; plays a role in ER morphology zinc-finger motif lies at 201 to 227 (CSHCFHHNGLASYGEKASDVRYVCLFC). The tract at residues 237-315 (KSLPSSEMDS…SSPDASYNSV (79 aa)) is disordered. Residues 239 to 252 (LPSSEMDSNLQTNP) show a composition bias toward polar residues. Residues 253-270 (SSISKGKKNNSNNTTQKG) show a composition bias toward low complexity. Residues 273-283 (IISSPQVINAS) are compositionally biased toward polar residues. Serine 284 bears the Phosphoserine mark. Residues 297-315 (ALPTSPLSSSSPDASYNSV) are compositionally biased toward low complexity.

Belongs to the lunapark family.

The protein localises to the endoplasmic reticulum membrane. It localises to the golgi apparatus membrane. Its function is as follows. Plays a role in tubular endoplasmic reticulum network formation and maintenance. In Schizosaccharomyces pombe (strain 972 / ATCC 24843) (Fission yeast), this protein is Endoplasmic reticulum junction formation protein lunapark (lnp1).